We begin with the raw amino-acid sequence, 284 residues long: L-ribulose-5-phosphate 3-epimerase UlaE (284 aa).

This sequence belongs to the L-ribulose-5-phosphate 3-epimerase family.

The enzyme catalyses L-ribulose 5-phosphate = L-xylulose 5-phosphate. The protein operates within cofactor degradation; L-ascorbate degradation; D-xylulose 5-phosphate from L-ascorbate: step 3/4. Catalyzes the isomerization of L-xylulose-5-phosphate to L-ribulose-5-phosphate. Is involved in the anaerobic L-ascorbate utilization. The protein is L-ribulose-5-phosphate 3-epimerase UlaE of Escherichia coli (strain K12 / MC4100 / BW2952).